The primary structure comprises 502 residues: Alpha-ketoglutarate-dependent dioxygenase FTO (502 aa).

The interval 32–324 (TPKDDEFYQQ…SSTHRVAECS (293 aa)) is fe2OG dioxygenase domain. Substrate contacts are provided by R96 and Y108. A 2-oxoglutarate-binding site is contributed by N202. The interval 210–221 (PYLKEEPYFGMG) is loop L1; predicted to block binding of double-stranded DNA or RNA. An N6-acetyllysine modification is found at K213. Positions 228 and 230 each coordinate Fe cation. 228–231 (HHDE) contributes to the substrate binding site. 2-oxoglutarate is bound at residue Y292. H304 lines the Fe cation pocket. 2-oxoglutarate is bound by residues 313-315 (RFS), T317, and R319.

Belongs to the fto family. As to quaternary structure, monomer. May also exist as homodimer. Fe(2+) is required as a cofactor. As to expression, ubiquitous. Highly expressed in teeth and weakly in bone.

It is found in the nucleus. The protein resides in the nucleus speckle. It localises to the cytoplasm. It carries out the reaction a 5'-end (N(7)-methyl 5'-triphosphoguanosine)-(N(6),2'-O-dimethyladenosine) in mRNA + 2-oxoglutarate + O2 = a 5'-end (N(7)-methyl 5'-triphosphoguanosine)-(2'-O-methyladenosine) in mRNA + formaldehyde + succinate + CO2. The catalysed reaction is an N(6)-methyladenosine in mRNA + 2-oxoglutarate + O2 = an adenosine in mRNA + formaldehyde + succinate + CO2. The enzyme catalyses N(6)-methyladenosine in U6 snRNA + 2-oxoglutarate + O2 = adenosine in U6 snRNA + formaldehyde + succinate + CO2. It catalyses the reaction a 5'-end (N(7)-methyl 5'-triphosphoguanosine)-(N(6),2'-O-dimethyladenosine) in U6 snRNA + 2-oxoglutarate + O2 = a 5'-end (N(7)-methyl 5'-triphosphoguanosine)-(2'-O-methyladenosine) in U6 snRNA + formaldehyde + succinate + CO2. It carries out the reaction an N(1)-methyladenosine in tRNA + 2-oxoglutarate + O2 = an adenosine in tRNA + formaldehyde + succinate + CO2. With respect to regulation, activated by ascorbate. Inhibited by N-oxalylglycine, fumarate and succinate. Functionally, RNA demethylase that mediates oxidative demethylation of different RNA species, such as mRNAs, tRNAs and snRNAs, and acts as a regulator of fat mass, adipogenesis and energy homeostasis. Specifically demethylates N(6)-methyladenosine (m6A) RNA, the most prevalent internal modification of messenger RNA (mRNA) in higher eukaryotes. M6A demethylation by FTO affects mRNA expression and stability. Also able to demethylate m6A in U6 small nuclear RNA (snRNA). Mediates demethylation of N(6),2'-O-dimethyladenosine cap (m6A(m)), by demethylating the N(6)-methyladenosine at the second transcribed position of mRNAs and U6 snRNA. Demethylation of m6A(m) in the 5'-cap by FTO affects mRNA stability by promoting susceptibility to decapping. Also acts as a tRNA demethylase by removing N(1)-methyladenine from various tRNAs. Has no activity towards 1-methylguanine. Has no detectable activity towards double-stranded DNA. Also able to repair alkylated DNA and RNA by oxidative demethylation: demethylates single-stranded RNA containing 3-methyluracil, single-stranded DNA containing 3-methylthymine and has low demethylase activity towards single-stranded DNA containing 1-methyladenine or 3-methylcytosine. Ability to repair alkylated DNA and RNA is however unsure in vivo. Involved in the regulation of fat mass, adipogenesis and body weight, thereby contributing to the regulation of body size and body fat accumulation. Involved in the regulation of thermogenesis and the control of adipocyte differentiation into brown or white fat cells. Regulates activity of the dopaminergic midbrain circuitry via its ability to demethylate m6A in mRNAs. This chain is Alpha-ketoglutarate-dependent dioxygenase FTO, found in Rattus norvegicus (Rat).